The chain runs to 662 residues: Histidine decarboxylase (662 aa).

Residues Tyr-88 and His-201 each contribute to the substrate site. An N6-(pyridoxal phosphate)lysine modification is found at Lys-312. The disordered stretch occupies residues 489–518 (QPSPRAKNVIPPPPGTRGLSLESVSEGGDD).

Belongs to the group II decarboxylase family. Homodimer. The cofactor is pyridoxal 5'-phosphate.

The catalysed reaction is L-histidine + H(+) = histamine + CO2. It functions in the pathway amine and polyamine biosynthesis; histamine biosynthesis; histamine from L-histidine: step 1/1. Functionally, catalyzes the biosynthesis of histamine from histidine. The chain is Histidine decarboxylase (Hdc) from Mus musculus (Mouse).